The primary structure comprises 501 residues: TNF receptor-associated factor 2 (501 aa).

Residue Ala2 is modified to N-acetylalanine. Ser5 carries the post-translational modification Phosphoserine. Position 7 is a phosphothreonine (Thr7). Ser11 is modified (phosphoserine). Thr22 bears the Phosphothreonine mark. Lys31 is covalently cross-linked (Glycyl lysine isopeptide (Lys-Gly) (interchain with G-Cter in ubiquitin)). The RING-type zinc-finger motif lies at 34–73; the sequence is CSACKNILRRPFQAQCGHRYCSFCLTSILSSGPQNCAACV. Thr117 carries the phosphothreonine; by PKC modification. 2 consecutive TRAF-type zinc fingers follow at residues 124-180 and 177-233; these read CHEG…VHYE and VHYE…ENLQ. Positions 283 to 293 are important for interaction with BIRC2 and BIRC3; sequence ENIVCVLNREV. Positions 298 to 348 form a coiled coil; the sequence is VTAEACSRQHRLDQDKIEALSNKVQQLERSIGLKDLAMADLEQKVSELEVS. Lys320 participates in a covalent cross-link: Glycyl lysine isopeptide (Lys-Gly) (interchain with G-Cter in ubiquitin). The region spanning 351-496 is the MATH domain; sequence DGVFIWKISD…DDAIFIKAIV (146 aa).

Belongs to the TNF receptor-associated factor family. A subfamily. In terms of assembly, homotrimer. Heterotrimer with TRAF1. Heterotrimer with TRAF3 (via TRAF domain). The domain containing the RING-type and the first TRAF-type zinc finger can also form homodimers (in vitro). Interacts with TNFRSF1B/TNFR2. Interacts with TNFRSF5/CD40. Interacts with TNFRSF4, TNFRSF7/CD27, TNFRSF8/CD30, TNFRSF9/CD137, TNFRSF11A/RANK, TNFRSF13B/TACI, TNFRSF14, TNFRSF16/NGFR, TNFRSF17/BCMA, TNFRSF18/AITR, TNFRSF19/TROY, TNFRSF19L/RELT and EDAR. Stimulation of TNF-alpha receptor TNFRSF1A leads to the formation of two distinct signaling complexes. Plasma membrane-bound complex I is composed of TNFRSF1A, TRADD, RIPK1, TRAF2 and BIRC2/c-IAP1 or BIRC3 which interacts with CHUCK/IKK-alpha, IKBKB/IKK-beta and IKBKG/IKK-gamma promoting cell survival. Subsequently, TRADD, RIPK1 and TRAF2 dissociate from TNFRSF1A and form cytoplasmic complex II with FADD and caspase CASP8 promoting cell apoptosis. Interacts with TRADD. Identified in a complex with TNFRSF1A, RIPK1 and IKBKB/IKK-beta. Interacts with RIPK2. Interacts with BIRC2 and BIRC3 N-terminus; a single BIRC2 or BIRC3 molecule interacts with a heterotrimer formed by TRAF1 and TRAF2, or a TRAF2 homotrimer. Identified in a complex composed of TRAF2, TRAF3, BIRC2 and BIRC3. Interacts with BIRC2; the interaction promotes BIRC2 stability. Interaction with BIRC2 and/or BIRC3 is essential for ubiquitination of IKBKE, degradation of NFKBIA and activation of NF-kappa-B. Within complex I, phosphorylated TRAF2 interacts (via 'Lys-63'-linked polyubiquitin chains) with CHUCK/IKK-alpha, IKBKB/IKK-beta, IKBKG/IKK-gamma TAB2, TAB3 and TAK1 in response to TNF-alpha stimulation. Within complex I, interacts with UXT isoform 1 (via TPQE motif); the interaction prevents the recruitment of FADD and CASP8/caspase 8 to complex I. Forms a complex composed of TNFRSF8/CD30 or TNFRSF1B/TNFR2, and TRAF1, TRAF2 and E3 ligase TRAIP. Within the complex, interacts with TRAIP; the interaction inhibits TRAF2-mediated NF-kappa B activation. Component of a complex composed of TANK and TBK1. Interacts with TRPC4AP. Interacts with MAP3K1/MEKK1, MAP3K5/ASK1 and MAP3K11/MLK3 in response to TNF-alpha stimulation; the interaction leads to JNK activation and interaction with MAP3K5 is inhibited by PRMT1. Component of a complex composed of MAP3K14/NIK BIRC3 and TRAF3; the interaction leads to BIRC2/3-mediated ubiquitination of TRAF3 upon CD40 engagement in a TRAF2-dependent manner. Interacts with MAP3K14/NIK in response to TNF-alpha stimulation; the interaction leads to NF-kappa B activation. Interacts with PEG3; the interaction may promote TRAF2-mediated NF-kappa B activation. Interacts with HIVEP3; the interaction may inhibit TNF-alpha-TRAF2-mediated NF-kappa B and JNK activation. Interacts with TANK/ITRAF; the interaction prevents interaction between TNFRSF1B/TNFR2 and TRAF2. Interacts with deubiquitinating enzyme CYLD; the interaction results in the deubiquitination and inactivation of TRAF2. Interacts with SIAH2; the interaction leads to TRAF2 ubiquitination and degradation. Interacts with E2 conjugating enzyme UBE2N/Ubc13, E3 ligase ITCH and RNF11 in response to TNF-alpha stimulation. Interacts with ubiquitin-editing enzyme TNFAIP3/A20 in response to TNF-alpha stimulation; the interaction promotes TRAF2 dissociation from UBE2N/Ubc13, ITCH, RNF11 and TAX1BP1 and prevents prolonged TRAF-2 ubiquitination. Interacts with TAX1BP1 in response to TNF-alpha stimulation; the interaction promotes TRAF2 dissociation from UBE2N/Ubc13 and TNFAIP3/A20, and prevents prolonged TRAF-2 ubiquitination. Interacts (via C-terminus) with EIF2AK2/PKR (via the kinase catalytic domain). Interacts with deubiquitinating enzyme USP48. Interacts with PTPN2; probably involved in TNF-mediated signaling. Interacts with Toll-like receptor TLR4/3 adapter TICAM1/TRIF; the interaction may promote TICAM1 ubiquitination. Interacts with kinase/endoribonuclease ERN1/IRE1 and DAB2IP in response to ER stress; the interaction requires DAB2IP. Interacts with ERN1/IRE1 and TAOK3 in response to ER stress; the interaction may promote TRAF2 phosphorylation. Interacts (via zinc fingers) with DAB2IP (via C-terminus PER domain) in response to TNF-alpha stimulation. Interacts with CASP8AP2/FLASH. Interacts with NFATC2IP; the interaction may repress IL-4 production in T cells. Interacts with kinase CDK9. Interacts with sphingosine kinase 1 SPHK1. Interacts with kinase TNIK. Interacts with TRAFD1. Interacts with DNA phosphodiesterase TDP2. Interacts with MAVS/IPS1. Interacts with CARD14. Interacts with GPS2. Interacts with XPNPEP3. Interacts with RIPK3. Interacts with RELL2. Interacts with LRRC19. Interacts with GAPDH; promoting TRAF2 ubiquitination. Phosphorylated at several serine residues within the first 128 amino acid residues. Phosphorylated at Thr-117 in response to signaling via TNF and TNFRSF1A. Phosphorylation at Thr-117 is required for 'Lys-63'-linked polyubiquitination, but not for 'Lys-48'-linked polyubiquitination. Phosphorylation at Thr-117 is important for interaction with IKKA and IKKB, activation of IKK and subsequent activation of NF-kappa-B. In terms of processing, undergoes both 'Lys-48'-linked and 'Lys-63'-linked polyubiquitination. Polyubiquitinated via 'Lys-63'-linked ubiquitin in response to TNF signaling; this requires prior phosphorylation at Thr-117. 'Lys-63'-linked polyubiquitination promotes TRAF2-mediated activation of NF-kappa-B. Can be polyubiquitinated at several Lys residues via 'Lys-48'-linked ubiquitin chains in response to TNF signaling, leading to proteasomal degradation. Autoubiquitinated, leading to its subsequent proteasomal degradation. Polyubiquitinated by BIRC2 and SIAH2, leading to its subsequent proteasomal degradation. Not ubiquitinated by BIRC3 or SIAH1. Deubiquitinated by CYLD, a protease that specifically cleaves 'Lys-63'-linked polyubiquitin chains. Ubiquination is inhibited by LRRC19; inhiits proteasomal degradation. Ubiquitinated at Lys-320 by the SCF(FBXL2) complex, leading to its degradation by the proteasome. Ubiquitinated by E3 ubiquitin-protein ligase complex containing FBXO7; leading to repression of NF-kappa-B signaling. As to expression, isoform 1 and isoform 2 are expressed in spleen, adipose tissues, skeletal muscles, thymus, testis, heart, lung, brain. Isoform 2 is very weakly expressed in heart, lung and brain.

The protein localises to the cytoplasm. It carries out the reaction S-ubiquitinyl-[E2 ubiquitin-conjugating enzyme]-L-cysteine + [acceptor protein]-L-lysine = [E2 ubiquitin-conjugating enzyme]-L-cysteine + N(6)-ubiquitinyl-[acceptor protein]-L-lysine.. The protein operates within protein modification; protein ubiquitination. With respect to regulation, has very low E3 ubiquitin ligase activity in the absence of sphingosine-1-phosphate. E3 ubiquitin ligase activity is strongly activated by cytoplasmic sphingosine-1-phosphate. In terms of biological role, E3 ubiquitin-protein ligase that regulates activation of NF-kappa-B and JNK and plays a central role in the regulation of cell survival and apoptosis. Catalyzes 'Lys-63'-linked ubiquitination of target proteins, such as BIRC3, IKBKE, MLST8, RIPK1 and TICAM1. Is an essential constituent of several E3 ubiquitin-protein ligase complexes, where it promotes the ubiquitination of target proteins by bringing them into contact with other E3 ubiquitin ligases. Regulates BIRC2 and BIRC3 protein levels by inhibiting their autoubiquitination and subsequent degradation; this does not depend on the TRAF2 RING-type zinc finger domain. Plays a role in mediating activation of NF-kappa-B by EIF2AK2/PKR. In complex with BIRC2 or BIRC3, promotes ubiquitination of IKBKE. Acts as a regulator of mTORC1 and mTORC2 assembly by mediating 'Lys-63'-linked ubiquitination of MLST8, thereby inhibiting formation of the mTORC2 complex, while facilitating assembly of the mTORC1 complex. Required for normal antibody isotype switching from IgM to IgG. The polypeptide is TNF receptor-associated factor 2 (Traf2) (Mus musculus (Mouse)).